The sequence spans 103 residues: Small ribosomal subunit protein uS10 (103 aa).

This sequence belongs to the universal ribosomal protein uS10 family. Part of the 30S ribosomal subunit.

Functionally, involved in the binding of tRNA to the ribosomes. This chain is Small ribosomal subunit protein uS10, found in Blochmanniella pennsylvanica (strain BPEN).